The primary structure comprises 430 residues: Serine--tRNA ligase (430 aa).

Residue 237 to 239 (TAE) coordinates L-serine. 268–270 (RSE) contributes to the ATP binding site. E291 contributes to the L-serine binding site. ATP is bound at residue 355 to 358 (EISS). Residue S391 coordinates L-serine.

This sequence belongs to the class-II aminoacyl-tRNA synthetase family. Type-1 seryl-tRNA synthetase subfamily. Homodimer. The tRNA molecule binds across the dimer.

The protein localises to the cytoplasm. The catalysed reaction is tRNA(Ser) + L-serine + ATP = L-seryl-tRNA(Ser) + AMP + diphosphate + H(+). The enzyme catalyses tRNA(Sec) + L-serine + ATP = L-seryl-tRNA(Sec) + AMP + diphosphate + H(+). It participates in aminoacyl-tRNA biosynthesis; selenocysteinyl-tRNA(Sec) biosynthesis; L-seryl-tRNA(Sec) from L-serine and tRNA(Sec): step 1/1. Functionally, catalyzes the attachment of serine to tRNA(Ser). Is also able to aminoacylate tRNA(Sec) with serine, to form the misacylated tRNA L-seryl-tRNA(Sec), which will be further converted into selenocysteinyl-tRNA(Sec). The sequence is that of Serine--tRNA ligase from Yersinia enterocolitica serotype O:8 / biotype 1B (strain NCTC 13174 / 8081).